A 257-amino-acid chain; its full sequence is MMRYALGVEYDGSEFLGWQQLGEMGPSVQATLQQALASVADSSVRVVCAGRTDAGVHGQCQVVHFDSAVTRPPRAWILGTTTRLPSSVAVRWCVPTSEDFHARFSACARRYRYRLLNRQVRPALQHQFLSWERHPLDAQAMHVAAQMLLGENDFSAFRSAQCQALHARRELQAISVRRDAEVIEICVQANAFLHHMVRNIVGSLLMVGTGERPMEWIAELLAGRDRTMAGPTASARGLVFVGPLYPEKWHLPMEVSV.

Residue Asp53 is the Nucleophile of the active site. Tyr111 is a binding site for substrate.

Belongs to the tRNA pseudouridine synthase TruA family. In terms of assembly, homodimer.

The catalysed reaction is uridine(38/39/40) in tRNA = pseudouridine(38/39/40) in tRNA. Formation of pseudouridine at positions 38, 39 and 40 in the anticodon stem and loop of transfer RNAs. This Xylella fastidiosa (strain M23) protein is tRNA pseudouridine synthase A.